Reading from the N-terminus, the 39-residue chain is Photosystem II reaction center protein L (39 aa).

The chain crosses the membrane as a helical span at residues 18–38 (SLYLGLLIVFTTGILFSSYFF).

It belongs to the PsbL family. As to quaternary structure, PSII is composed of 1 copy each of membrane proteins PsbA, PsbB, PsbC, PsbD, PsbE, PsbF, PsbH, PsbI, PsbJ, PsbK, PsbL, PsbM, PsbT, PsbX, PsbY, PsbZ, Psb30/Ycf12, peripheral proteins PsbO, CyanoQ (PsbQ), PsbU, PsbV and a large number of cofactors. It forms dimeric complexes.

Its subcellular location is the cellular thylakoid membrane. Its function is as follows. One of the components of the core complex of photosystem II (PSII). PSII is a light-driven water:plastoquinone oxidoreductase that uses light energy to abstract electrons from H(2)O, generating O(2) and a proton gradient subsequently used for ATP formation. It consists of a core antenna complex that captures photons, and an electron transfer chain that converts photonic excitation into a charge separation. This subunit is found at the monomer-monomer interface and is required for correct PSII assembly and/or dimerization. This is Photosystem II reaction center protein L from Synechococcus sp. (strain CC9311).